A 976-amino-acid chain; its full sequence is 3-O-beta-L-arabinopyranosyl-alpha-L-arabinofuranosidase (976 aa).

An N-terminal signal peptide occupies residues 1–28 (MSHRNKALVAIVAGTALLISSGAAIGQA). Glu190 functions as the Proton donor in the catalytic mechanism. The active-site Nucleophile is Glu315. The CBM6 domain occupies 519–654 (LLVEEVENTV…DNTLDKFLLY (136 aa)).

Belongs to the glycosyl hydrolase 39 family.

The protein localises to the secreted. It carries out the reaction Hydrolysis of beta-L-Arap-(1-&gt;3)-L-Araf disaccharides from non-reducing terminals in branches of type II arabinogalactan attached to proteins.. Hydrolase involved in the degradation of the gum arabic arabinogalactan protein (AGP) and larch AGP. Catalyzes the release of 3-O-beta-L-arabinopyranosyl-L-arabinose (beta-L-Arap-(1-&gt;3)-L-Ara) from gum arabic AGP and larch AGP. Also cleaves a small amount of beta-L-Arap-(1-&gt;3)-L-Ara from sugar beet arabinan, but wheat AGP cannot be used as a substrate. Can also release 3-O-alpha-D-galactopyranosyl-L-arabinose (alpha-D-Galp-(1-&gt;3)-L-Ara) from gum arabic AGP, with low efficiency. The protein is 3-O-beta-L-arabinopyranosyl-alpha-L-arabinofuranosidase of Bifidobacterium pseudocatenulatum.